We begin with the raw amino-acid sequence, 197 residues long: Putative manganese efflux pump MntP 1 (197 aa).

Transmembrane regions (helical) follow at residues 8-28 (VILL…GLGA), 43-63 (VYAA…GYLL), 66-86 (VLLG…LILL), 123-143 (LAIA…LLAL), 146-166 (WLAC…GIYL), and 176-196 (DKAE…VMFI).

This sequence belongs to the MntP (TC 9.B.29) family.

The protein localises to the cell inner membrane. Probably functions as a manganese efflux pump. The polypeptide is Putative manganese efflux pump MntP 1 (Psychrobacter cryohalolentis (strain ATCC BAA-1226 / DSM 17306 / VKM B-2378 / K5)).